The chain runs to 327 residues: tRNA uridine(34) hydroxylase (327 aa).

In terms of domain architecture, Rhodanese spans 142–240; the sequence is DDPDTLVIDT…YLEQVPEAES (99 aa). C200 serves as the catalytic Cysteine persulfide intermediate.

Belongs to the TrhO family.

The enzyme catalyses uridine(34) in tRNA + AH2 + O2 = 5-hydroxyuridine(34) in tRNA + A + H2O. In terms of biological role, catalyzes oxygen-dependent 5-hydroxyuridine (ho5U) modification at position 34 in tRNAs. The sequence is that of tRNA uridine(34) hydroxylase from Synechococcus sp. (strain CC9605).